A 731-amino-acid polypeptide reads, in one-letter code: Two pore channel protein 2 (731 aa).

The Cytoplasmic portion of the chain corresponds to 1-68; sequence MAAEEQPLLG…RWYYSNVCQR (68 aa). A helical transmembrane segment spans residues 69–89; it reads VLGFIIFLILILAFVEVPSSF. Over 90 to 111 the chain is Extracellular; the sequence is TKTADVRYRSQPWQPPCGLTET. A helical membrane pass occupies residues 112-132; sequence IEAFCLLAFLVDLSVKGYLVG. Over 133 to 139 the chain is Cytoplasmic; it reads QAQLQQN. The helical transmembrane segment at 140 to 160 threads the bilayer; it reads LWLLAYFMVLVVSVVDWIVSL. At 161 to 167 the chain is on the extracellular side; that stretch reads SLACEEP. The chain crosses the membrane as a helical span at residues 168 to 188; that stretch reads LRMRRLLRPFFLLQNSSMMKK. Positions 187–191 are interaction with phosphatidylinositol 3,5-bisphosphate; that stretch reads KKTLK. At 189–203 the chain is on the cytoplasmic side; sequence TLKCIRWSLPEMASV. The helical transmembrane segment at 204-224 threads the bilayer; that stretch reads GLLLAIHLCLFTIIGMLLFTI. The Extracellular portion of the chain corresponds to 225 to 238; that stretch reads GEKDEAQDQERLAY. Positions 239-263 form an intramembrane region, helical; Pore-forming; it reads FRNLPEALTSLLVLLTTSNNPDVMI. The Extracellular portion of the chain corresponds to 264–270; the sequence is PAYTQNR. The chain crosses the membrane as a helical span at residues 271–291; the sequence is AFALFFIVFTLIGSLFLMNLL. Residues 292–417 lie on the Cytoplasmic side of the membrane; it reads TAIIYNQFRG…TAQFIFSHHY (126 aa). The helical transmembrane segment at 418–438 threads the bilayer; that stretch reads FDYLGNLVALGNLLSICVFLV. The Extracellular portion of the chain corresponds to 439 to 449; sequence LDSDLLPGERD. Residues 450–470 form a helical membrane-spanning segment; sequence DFVLGILDYIFILYYLLELLF. Residues 471 to 486 lie on the Cytoplasmic side of the membrane; the sequence is KVFALGLPGYLSYHSN. Residues 487 to 507 form a helical membrane-spanning segment; it reads VFDGLLTIILLVSEICTLAVY. At 508 to 524 the chain is on the extracellular side; that stretch reads RLPHSGWKPEQYGPLSL. The helical transmembrane segment at 525–542 threads the bilayer; the sequence is WDMTRLMNTLIVFRFLRI. Over 543–564 the chain is Cytoplasmic; the sequence is IPNIKPMAEVANTILGLIPNLR. Residues 565–585 traverse the membrane as a helical segment; the sequence is AFGGILVVAYYVFAMIGINLF. Over 586-618 the chain is Extracellular; it reads RGVIVPPGNSSLVPDNNSAVCGSFEQLGYWPNN. Asparagine 594 and asparagine 601 each carry an N-linked (GlcNAc...) asparagine glycan. Residues 619–641 constitute an intramembrane region (helical; Pore-forming); sequence FDDFAAALITLWNVMVVNNWQVI. The Extracellular portion of the chain corresponds to 642–656; sequence LEAYKRYAGPWSMVY. Residues 657–677 form a helical membrane-spanning segment; that stretch reads FVLWWLVSSVIWINLFLALLL. Topologically, residues 678–731 are cytoplasmic; the sequence is ENFLHRWDPQGHKQLLVGTKQMSVELMFRDILEEPKEEELMEKLHKHPHLHLCR.

The protein belongs to the calcium channel alpha-1 subunit (TC 1.A.1.11) family. Two pore calcium channel subfamily. As to quaternary structure, homodimer. Interacts with LRRK2. Interacts with HAX1. Interacts with MTOR; the interaction is required for TPCN2 ATP sensitivity. Found in a complex with LSM12, TPCN1 and TPCN2. Interacts with LSM12. N-glycosylated. As to expression, widely expressed. Highly expressed in macrophages. Expressed in pigmented cells.

It localises to the late endosome membrane. It is found in the lysosome membrane. Its subcellular location is the melanosome membrane. It carries out the reaction Ca(2+)(in) = Ca(2+)(out). The enzyme catalyses Na(+)(in) = Na(+)(out). Its activity is regulated as follows. Regulated by Mg(2+) ions, cytosolic Mg(2+) selectively inhibits outward current while lysosomal Mg(2+) modestly inhibits both the outward and inward currents. In the absence of Mg(2+), NAADP readily activates TPCN2, with properties similar to PI(3,5)P2. Na(+) current is inhibited by ATP in a MTORC-dependent manner. ATP sensitivity is independent of PI(3,5)P2. Both current elicited by PI(3,5)P2 as well as NAADP are inhibited by tetrandrine. Its function is as follows. Intracellular channel initially characterized as a non-selective Ca(2+)-permeable channel activated by NAADP (nicotinic acid adenine dinucleotide phosphate), it is also a highly-selective Na(+) channel activated directly by PI(3,5)P2 (phosphatidylinositol 3,5-bisphosphate). Localizes to the lysosomal and late endosome membranes where it regulates organellar membrane excitability, membrane trafficking, and pH homeostasis. Is associated with a plethora of physiological processes, including mTOR-dependent nutrient sensing, skin pigmentation and autophagy. Ion selectivity is not fixed but rather agonist-dependent and under defined ionic conditions, can be readily activated by both NAADP and PI(3,5)P2. As calcium channel, it increases the pH in the lysosomal lumen, as sodium channel, it promotes lysosomal exocytosis. Plays a crucial role in endolysosomal trafficking in the endolysosomal degradation pathway and is potentially involved in the homeostatic control of many macromolecules and cell metabolites. Also expressed in melanosomes of pigmented cells where mediates a Ca(2+) channel and/or PI(3,5)P2-activated melanosomal Na(+) channel to acidify pH and inhibit tyrosinase activity required for melanogenesis and pigmentation. Unlike the voltage-dependent TPCN1, TPCN2 is voltage independent and can be activated solely by PI(3,5)P2 binding. In contrast, PI(4,5)P2, PI(3,4)P2, PI(3)P and PI(5)P have no obvious effect on channel activation. Functionally, (Microbial infection) During Ebola virus (EBOV) infection, controls the movement of endosomes containing virus particles and is required by EBOV to escape from the endosomal network into the cell cytoplasm. The protein is Two pore channel protein 2 of Mus musculus (Mouse).